The sequence spans 240 residues: Ribonuclease HII (240 aa).

One can recognise an RNase H type-2 domain in the interval 31–222 (RLIAGVDEAG…VRRALGLETA (192 aa)). A divalent metal cation is bound by residues Asp37, Glu38, and Asp130.

The protein belongs to the RNase HII family. Mn(2+) serves as cofactor. Requires Mg(2+) as cofactor.

The protein localises to the cytoplasm. The catalysed reaction is Endonucleolytic cleavage to 5'-phosphomonoester.. Its function is as follows. Endonuclease that specifically degrades the RNA of RNA-DNA hybrids. This chain is Ribonuclease HII, found in Xanthomonas campestris pv. campestris (strain B100).